A 398-amino-acid polypeptide reads, in one-letter code: UPF0496 protein At5g66660 (398 aa).

A run of 2 helical transmembrane segments spans residues 240–260 (VFFA…TTMS) and 263–283 (PVVC…GKWF).

The protein belongs to the UPF0496 family.

It localises to the membrane. In Arabidopsis thaliana (Mouse-ear cress), this protein is UPF0496 protein At5g66660.